An 88-amino-acid chain; its full sequence is Secretion system apparatus protein SsaS (88 aa).

Helical transmembrane passes span 15-35 and 55-75; these read WIVL…GVIV and LLAI…ILLN.

This sequence belongs to the FliQ/MopD/SpaQ family.

It is found in the cell membrane. In terms of biological role, part of a type III secretion system. This is Secretion system apparatus protein SsaS (ssaS) from Salmonella typhimurium (strain LT2 / SGSC1412 / ATCC 700720).